The primary structure comprises 114 residues: Large ribosomal subunit protein uL18 (114 aa).

Belongs to the universal ribosomal protein uL18 family. As to quaternary structure, part of the 50S ribosomal subunit; part of the 5S rRNA/L5/L18/L25 subcomplex. Contacts the 5S and 23S rRNAs.

Its function is as follows. This is one of the proteins that bind and probably mediate the attachment of the 5S RNA into the large ribosomal subunit, where it forms part of the central protuberance. The sequence is that of Large ribosomal subunit protein uL18 from Bacteroides fragilis (strain ATCC 25285 / DSM 2151 / CCUG 4856 / JCM 11019 / LMG 10263 / NCTC 9343 / Onslow / VPI 2553 / EN-2).